A 148-amino-acid chain; its full sequence is Glutamyl-tRNA(Gln) amidotransferase subunit C, mitochondrial (148 aa).

This sequence belongs to the GatC family. Subunit of the heterotrimeric GatCAB amidotransferase (AdT) complex, composed of A, B and C subunits.

The protein resides in the mitochondrion. It catalyses the reaction L-glutamyl-tRNA(Gln) + L-glutamine + ATP + H2O = L-glutaminyl-tRNA(Gln) + L-glutamate + ADP + phosphate + H(+). In terms of biological role, allows the formation of correctly charged Gln-tRNA(Gln) through the transamidation of misacylated Glu-tRNA(Gln) in the mitochondria. The reaction takes place in the presence of glutamine and ATP through an activated gamma-phospho-Glu-tRNA(Gln). This is Glutamyl-tRNA(Gln) amidotransferase subunit C, mitochondrial from Drosophila simulans (Fruit fly).